The following is a 180-amino-acid chain: Transmembrane protein 190 (180 aa).

The signal sequence occupies residues 1 to 21 (MVGSGIPALGLLLLMQGSADG). At 22 to 81 (NGIQGFFYPWSCEGDVWDRESCGGQAAIENPNLCLRLRCCYRDGVCYHQRPDENMRRKHM) the chain is on the extracellular side. A P-type domain is found at 31-71 (WSCEGDVWDRESCGGQAAIENPNLCLRLRCCYRDGVCYHQR). 3 disulfides stabilise this stretch: cysteine 33/cysteine 61, cysteine 43/cysteine 60, and cysteine 55/cysteine 67. A helical membrane pass occupies residues 82 to 102 (WALGWTCGGLLFLITSICLFW). The Cytoplasmic segment spans residues 103-180 (WARRHDMLRL…EETEGGDEDD (78 aa)). The segment covering 131 to 140 (KDRTPSEKKT) has biased composition (basic and acidic residues). The tract at residues 131 to 180 (KDRTPSEKKTPSVGSIPPAAPTEGALDVSGGTEGEGTEGGEETEGGDEDD) is disordered. The segment covering 165-180 (EGTEGGEETEGGDEDD) has biased composition (acidic residues).

Its subcellular location is the membrane. The sequence is that of Transmembrane protein 190 (TMEM190) from Bos taurus (Bovine).